Reading from the N-terminus, the 396-residue chain is Glycerate kinase (396 aa).

The protein belongs to the glycerate kinase type-2 family.

Its subcellular location is the cytoplasm. The catalysed reaction is (R)-glycerate + ATP = (2R)-3-phosphoglycerate + ADP + H(+). This is Glycerate kinase (GLYCTK) from Macaca fascicularis (Crab-eating macaque).